A 427-amino-acid polypeptide reads, in one-letter code: Citrate synthase (427 aa).

Position 283 is an N6-acetyllysine (K283). Active-site residues include H306 and D363.

The protein belongs to the citrate synthase family. In terms of assembly, homohexamer.

The enzyme catalyses oxaloacetate + acetyl-CoA + H2O = citrate + CoA + H(+). It functions in the pathway carbohydrate metabolism; tricarboxylic acid cycle; isocitrate from oxaloacetate: step 1/2. The protein is Citrate synthase (gltA) of Escherichia coli O6:H1 (strain CFT073 / ATCC 700928 / UPEC).